The primary structure comprises 604 residues: Putative O-acetyltransferase SAV0974 (604 aa).

The next 11 membrane-spanning stretches (helical) occupy residues 15-35 (YMPG…IYHL), 43-63 (GFLG…SLLL), 85-105 (LLPA…LLKS), 150-170 (AIEE…LLTI), 176-196 (IGFI…FIYS), 212-232 (LQTL…KLKN), 240-260 (YVID…FFII), 267-287 (IYDG…ASVV), 310-330 (YSLY…YVDG), 332-352 (IPVY…ELSY), and 377-397 (FIRM…LVGA). Residues Ser-459, Asp-581, and His-584 contribute to the active site.

The protein belongs to the acyltransferase 3 family.

The protein resides in the cell membrane. In Staphylococcus aureus (strain Mu50 / ATCC 700699), this protein is Putative O-acetyltransferase SAV0974.